The primary structure comprises 278 residues: DNA adenine methylase (278 aa).

S-adenosyl-L-methionine contacts are provided by Trp10, Lys14, Asp54, and Asp181.

Belongs to the N(4)/N(6)-methyltransferase family.

The catalysed reaction is a 2'-deoxyadenosine in DNA + S-adenosyl-L-methionine = an N(6)-methyl-2'-deoxyadenosine in DNA + S-adenosyl-L-homocysteine + H(+). In terms of biological role, an alpha subtype methylase, recognizes the double-stranded sequence 5'-GATC-3' and methylates A-2. May be involved in methyl-directed DNA mismatch repair, initiation of chromosome replication and gene expression. The sequence is that of DNA adenine methylase (dam) from Escherichia coli O157:H7.